The primary structure comprises 151 residues: MSRLIHLSFVLALLACLTGPISANPIDDDRERLNQLLSNPEPADDAELLRNTQEAIALYKKHASRTLPGHQVELDLDRDIRAFETEHLTVDGLPIQGGVWDLIKRGADKVPDEVKDQAKELAKTTAKVLFNKLTEYLKKKISGEDAEKKDT.

A signal peptide spans 1 to 23 (MSRLIHLSFVLALLACLTGPISA).

This sequence belongs to the Turandot family.

It is found in the secreted. In terms of biological role, a humoral factor that may play a role in stress tolerance. The chain is Protein Turandot Z from Drosophila pseudoobscura pseudoobscura (Fruit fly).